Reading from the N-terminus, the 535-residue chain is Bifunctional purine biosynthesis protein PurH (535 aa).

The MGS-like domain maps to 6–151 (TRLPVRRALI…KNHKDVAIVV (146 aa)).

Belongs to the PurH family.

It carries out the reaction (6R)-10-formyltetrahydrofolate + 5-amino-1-(5-phospho-beta-D-ribosyl)imidazole-4-carboxamide = 5-formamido-1-(5-phospho-D-ribosyl)imidazole-4-carboxamide + (6S)-5,6,7,8-tetrahydrofolate. The enzyme catalyses IMP + H2O = 5-formamido-1-(5-phospho-D-ribosyl)imidazole-4-carboxamide. Its pathway is purine metabolism; IMP biosynthesis via de novo pathway; 5-formamido-1-(5-phospho-D-ribosyl)imidazole-4-carboxamide from 5-amino-1-(5-phospho-D-ribosyl)imidazole-4-carboxamide (10-formyl THF route): step 1/1. It functions in the pathway purine metabolism; IMP biosynthesis via de novo pathway; IMP from 5-formamido-1-(5-phospho-D-ribosyl)imidazole-4-carboxamide: step 1/1. The sequence is that of Bifunctional purine biosynthesis protein PurH from Pseudomonas putida (strain GB-1).